An 83-amino-acid chain; its full sequence is Toxin Aam1 (83 aa).

A signal peptide spans 1–19 (MNYLVMISLALLLMIGVES). The LCN-type CS-alpha/beta domain maps to 21–82 (RDGYIVYPHN…PIYDRSYKCY (62 aa)). 4 cysteine pairs are disulfide-bonded: Cys31-Cys81, Cys35-Cys53, Cys39-Cys63, and Cys43-Cys65.

This sequence belongs to the long (4 C-C) scorpion toxin superfamily. Sodium channel inhibitor family. Alpha subfamily. The C-terminal basic residue is removed by a carboxypeptidase. As to expression, expressed by the venom gland.

The protein resides in the secreted. In terms of biological role, alpha toxins bind voltage-independently at site-3 of sodium channels (Nav) and inhibit the inactivation of the activated channels, thereby blocking neuronal transmission. This Androctonus amoreuxi (African fattail scorpion) protein is Toxin Aam1 (H1).